We begin with the raw amino-acid sequence, 395 residues long: Elongation factor Tu (395 aa).

A tr-type G domain is found at 10-204; the sequence is KPHVNIGTIG…NVDEYIPLPQ (195 aa). The G1 stretch occupies residues 19–26; sequence GHVDHGKT. 19–26 serves as a coordination point for GTP; the sequence is GHVDHGKT. T26 lines the Mg(2+) pocket. Residues 60–64 are G2; sequence GITIN. Residues 81 to 84 form a G3 region; sequence DCPG. GTP is bound by residues 81–85 and 136–139; these read DCPGH and NKVD. The segment at 136–139 is G4; the sequence is NKVD. The tract at residues 174-176 is G5; it reads SAL.

The protein belongs to the TRAFAC class translation factor GTPase superfamily. Classic translation factor GTPase family. EF-Tu/EF-1A subfamily. In terms of assembly, monomer.

It is found in the cytoplasm. The catalysed reaction is GTP + H2O = GDP + phosphate + H(+). In terms of biological role, GTP hydrolase that promotes the GTP-dependent binding of aminoacyl-tRNA to the A-site of ribosomes during protein biosynthesis. This chain is Elongation factor Tu, found in Amoebophilus asiaticus (strain 5a2).